A 25-amino-acid polypeptide reads, in one-letter code: Germin-like protein (25 aa).

Belongs to the germin family.

The sequence is that of Germin-like protein from Populus euphratica (Euphrates poplar).